The following is a 374-amino-acid chain: Chaperone protein DnaJ (374 aa).

Positions 5-70 constitute a J domain; that stretch reads DFYEILGVSK…EKRSAYDRMG (66 aa). The segment at 133 to 211 adopts a CR-type zinc-finger fold; it reads GCKKEISFTA…CHGNGVKDKS (79 aa). Zn(2+) is bound by residues Cys146, Cys149, Cys163, Cys166, Cys185, Cys188, Cys199, and Cys202. CXXCXGXG motif repeat units lie at residues 146–153, 163–170, 185–192, and 199–206; these read CDTCDGKG, CQTCHGQG, CPHCGGTG, and CSDCHGNG.

This sequence belongs to the DnaJ family. As to quaternary structure, homodimer. It depends on Zn(2+) as a cofactor.

The protein localises to the cytoplasm. Its function is as follows. Participates actively in the response to hyperosmotic and heat shock by preventing the aggregation of stress-denatured proteins and by disaggregating proteins, also in an autonomous, DnaK-independent fashion. Unfolded proteins bind initially to DnaJ; upon interaction with the DnaJ-bound protein, DnaK hydrolyzes its bound ATP, resulting in the formation of a stable complex. GrpE releases ADP from DnaK; ATP binding to DnaK triggers the release of the substrate protein, thus completing the reaction cycle. Several rounds of ATP-dependent interactions between DnaJ, DnaK and GrpE are required for fully efficient folding. Also involved, together with DnaK and GrpE, in the DNA replication of plasmids through activation of initiation proteins. This Psychrobacter arcticus (strain DSM 17307 / VKM B-2377 / 273-4) protein is Chaperone protein DnaJ.